The chain runs to 146 residues: 3-dehydroquinate dehydratase (146 aa).

The Proton acceptor role is filled by tyrosine 24. Residues asparagine 75, histidine 81, and aspartate 88 each coordinate substrate. The active-site Proton donor is the histidine 101. Substrate-binding positions include 102 to 103 (LS) and arginine 112.

The protein belongs to the type-II 3-dehydroquinase family. As to quaternary structure, homododecamer.

It carries out the reaction 3-dehydroquinate = 3-dehydroshikimate + H2O. It functions in the pathway metabolic intermediate biosynthesis; chorismate biosynthesis; chorismate from D-erythrose 4-phosphate and phosphoenolpyruvate: step 3/7. In terms of biological role, catalyzes a trans-dehydration via an enolate intermediate. The chain is 3-dehydroquinate dehydratase from Caulobacter vibrioides (strain ATCC 19089 / CIP 103742 / CB 15) (Caulobacter crescentus).